A 252-amino-acid chain; its full sequence is Probable transcriptional regulatory protein HNE_0161 (252 aa).

The protein belongs to the TACO1 family.

It localises to the cytoplasm. The protein is Probable transcriptional regulatory protein HNE_0161 of Hyphomonas neptunium (strain ATCC 15444).